The primary structure comprises 180 residues: MSALTIFADNGASEPLWQSTDADAIREQLNAQGVRFERWQADRDLGDDPTPEAVLTAYQHAIDLLVAEKGYQSWDVISMRADNPQKEALRGKFLNEHTHGEDEVRFFVEGAGLFCLHIGDKVYQVLCEKNDLISVPAGTPHWFDMGSEPHFTAIRIFDNPEGWIANFTGSPIAEAYPRLA.

Fe(2+) is bound by residues His97, His99, Glu103, and His141. Positions 97, 99, 103, and 141 each coordinate Ni(2+).

It belongs to the acireductone dioxygenase (ARD) family. Monomer. The cofactor is Fe(2+). Ni(2+) serves as cofactor.

It catalyses the reaction 1,2-dihydroxy-5-(methylsulfanyl)pent-1-en-3-one + O2 = 3-(methylsulfanyl)propanoate + CO + formate + 2 H(+). It carries out the reaction 1,2-dihydroxy-5-(methylsulfanyl)pent-1-en-3-one + O2 = 4-methylsulfanyl-2-oxobutanoate + formate + 2 H(+). It functions in the pathway amino-acid biosynthesis; L-methionine biosynthesis via salvage pathway; L-methionine from S-methyl-5-thio-alpha-D-ribose 1-phosphate: step 5/6. In terms of biological role, catalyzes 2 different reactions between oxygen and the acireductone 1,2-dihydroxy-3-keto-5-methylthiopentene (DHK-MTPene) depending upon the metal bound in the active site. Fe-containing acireductone dioxygenase (Fe-ARD) produces formate and 2-keto-4-methylthiobutyrate (KMTB), the alpha-ketoacid precursor of methionine in the methionine recycle pathway. Ni-containing acireductone dioxygenase (Ni-ARD) produces methylthiopropionate, carbon monoxide and formate, and does not lie on the methionine recycle pathway. The sequence is that of Acireductone dioxygenase from Cronobacter sakazakii (Enterobacter sakazakii).